We begin with the raw amino-acid sequence, 248 residues long: Ribosomal RNA small subunit methyltransferase G (248 aa).

S-adenosyl-L-methionine contacts are provided by residues Gly93, Leu98, 143-144 (AE), and Arg161.

It belongs to the methyltransferase superfamily. RNA methyltransferase RsmG family.

The protein localises to the cytoplasm. In terms of biological role, specifically methylates the N7 position of guanine in position 518 of 16S rRNA. This Mycobacterium leprae (strain Br4923) protein is Ribosomal RNA small subunit methyltransferase G.